Consider the following 485-residue polypeptide: Glutamyl-tRNA(Gln) amidotransferase subunit A (485 aa).

Residues lysine 79 and serine 154 each act as charge relay system in the active site. Serine 178 acts as the Acyl-ester intermediate in catalysis.

The protein belongs to the amidase family. GatA subfamily. Heterotrimer of A, B and C subunits.

The catalysed reaction is L-glutamyl-tRNA(Gln) + L-glutamine + ATP + H2O = L-glutaminyl-tRNA(Gln) + L-glutamate + ADP + phosphate + H(+). In terms of biological role, allows the formation of correctly charged Gln-tRNA(Gln) through the transamidation of misacylated Glu-tRNA(Gln) in organisms which lack glutaminyl-tRNA synthetase. The reaction takes place in the presence of glutamine and ATP through an activated gamma-phospho-Glu-tRNA(Gln). The sequence is that of Glutamyl-tRNA(Gln) amidotransferase subunit A from Sulfurihydrogenibium sp. (strain YO3AOP1).